A 407-amino-acid chain; its full sequence is Phosphopentomutase (407 aa).

Mn(2+) contacts are provided by D10, D306, H311, D347, H348, and H359.

The protein belongs to the phosphopentomutase family. Mn(2+) is required as a cofactor.

It localises to the cytoplasm. The catalysed reaction is 2-deoxy-alpha-D-ribose 1-phosphate = 2-deoxy-D-ribose 5-phosphate. The enzyme catalyses alpha-D-ribose 1-phosphate = D-ribose 5-phosphate. It participates in carbohydrate degradation; 2-deoxy-D-ribose 1-phosphate degradation; D-glyceraldehyde 3-phosphate and acetaldehyde from 2-deoxy-alpha-D-ribose 1-phosphate: step 1/2. In terms of biological role, isomerase that catalyzes the conversion of deoxy-ribose 1-phosphate (dRib-1-P) and ribose 1-phosphate (Rib-1-P) to deoxy-ribose 5-phosphate (dRib-5-P) and ribose 5-phosphate (Rib-5-P), respectively. This chain is Phosphopentomutase, found in Buchnera aphidicola subsp. Acyrthosiphon pisum (strain Tuc7).